The primary structure comprises 329 residues: (+)-eremophilene synthase (329 aa).

2 residues coordinate Mg(2+): D91 and E96. The DDXXD motif signature appears at 91-95 (DDAYD). R185 lines the substrate pocket. Mg(2+) contacts are provided by N231 and S235. Substrate is bound at residue K238. Mg(2+) is bound at residue E239. Residue 317–318 (RY) participates in substrate binding.

Belongs to the terpene synthase family. It depends on Mg(2+) as a cofactor.

The catalysed reaction is (2E,6E)-farnesyl diphosphate = (+)-eremophilene + diphosphate. It participates in secondary metabolite biosynthesis; terpenoid biosynthesis. In terms of biological role, catalyzes the conversion of (2E,6E)-farnesyl diphosphate (FPP) to yield the bicyclic sesquiterpene eremophilene via a 1,10-cyclization, which requires the abstraction of the pyrophosphate from FPP to yield the (E,E)-germacradienyl cation. The only accepted substrate is farnesyl diphosphate (FPP). The polypeptide is (+)-eremophilene synthase (Sorangium cellulosum (strain So ce56) (Polyangium cellulosum (strain So ce56))).